The primary structure comprises 465 residues: Alpha-2A adrenergic receptor (465 aa).

Topologically, residues 1-48 (MFRQEQPLAEGSFAPMGSLQPDAGNASWNGTEAPGGGARATPYSLQVT) are extracellular. N-linked (GlcNAc...) asparagine glycosylation is found at N25 and N29. Residues 49–74 (LTLVCLAGLLMLLTVFGNVLVIIAVF) form a helical membrane-spanning segment. The Cytoplasmic segment spans residues 75-85 (TSRALKAPQNL). The helical transmembrane segment at 86 to 111 (FLVSLASADILVATLVIPFSLANEVM) threads the bilayer. Residues 112-121 (GYWYFGKAWC) lie on the Extracellular side of the membrane. C121 and C203 form a disulfide bridge. Residues 122–144 (EIYLALDVLFCTSSIVHLCAISL) traverse the membrane as a helical segment. The Cytoplasmic segment spans residues 145 to 166 (DRYWSITQAIEYNLKRTPRRIK). The chain crosses the membrane as a helical span at residues 167–187 (AIIITVWVISAVISFPPLISI). The Extracellular portion of the chain corresponds to 188 to 209 (EKKGGGGGPQPAEPRCEINDQK). Residues 210–232 (WYVISSCIGSFFAPCLIMILVYV) traverse the membrane as a helical segment. At 233–389 (RIYQIAKRRT…RQNREKRFTF (157 aa)) the chain is on the cytoplasmic side. A disordered region spans residues 242–368 (TRVPPSRRGP…TPAAGPGEER (127 aa)). Residues 313 to 330 (SSDHAERPPGPRRPERGP) show a composition bias toward basic and acidic residues. S346 bears the Phosphoserine mark. Position 368 is an omega-N-methylarginine (R368). A helical membrane pass occupies residues 390–410 (VLAVVIGVFVVCWFPFFFTYT). Over 411–424 (LTAVGCSVPRTLFK) the chain is Extracellular. A helical transmembrane segment spans residues 425-444 (FFFWFGYCNSSLNPVIYTIF). The Cytoplasmic segment spans residues 445–465 (NHDFRRAFKKILCRGDRKRIV). A lipid anchor (S-palmitoyl cysteine) is attached at C457.

The protein belongs to the G-protein coupled receptor 1 family. Adrenergic receptor subfamily. ADRA2A sub-subfamily.

It localises to the cell membrane. In terms of biological role, alpha-2 adrenergic receptors mediate the catecholamine-induced inhibition of adenylate cyclase through the action of G proteins. The rank order of potency for agonists of this receptor is oxymetazoline &gt; clonidine &gt; epinephrine &gt; norepinephrine &gt; phenylephrine &gt; dopamine &gt; p-synephrine &gt; p-tyramine &gt; serotonin = p-octopamine. For antagonists, the rank order is yohimbine &gt; phentolamine = mianserine &gt; chlorpromazine = spiperone = prazosin &gt; propanolol &gt; alprenolol = pindolol. The protein is Alpha-2A adrenergic receptor of Homo sapiens (Human).